A 216-amino-acid polypeptide reads, in one-letter code: Nucleolar protein 12 (216 aa).

The stretch at 33-97 forms a coiled coil; the sequence is GFHKRKVERK…LVTAKTESVQ (65 aa). Residues 120–216 form a disordered region; sequence LLGLPLPEQG…MTGKARHNGE (97 aa). Residues 129–140 show a composition bias toward acidic residues; sequence GDQDGSQEEEVS. Composition is skewed to basic residues over residues 171-183 and 200-216; these read AHSR…KHPR and KTQR…HNGE.

It belongs to the RRP17 family. Interacts with KIAA1191.

The protein localises to the nucleus. It is found in the nucleolus. The protein resides in the cytoplasm. In terms of biological role, multifunctional RNA binding protein that plays a role in RNA metabolism and DNA maintenance. Participates in the resolution of DNA stress and the maintenance of genome integrity by localizing to sites of DNA insults. Also plays a role in proper nucleolar organization by limiting nucleolar size and regulating nucleolar number. Mechanistically, regulates the nucleolar levels of fibrillarin and nucleolin, two key players in pre-rRNA processing and ribosome assembly. The polypeptide is Nucleolar protein 12 (Nol12) (Rattus norvegicus (Rat)).